A 262-amino-acid polypeptide reads, in one-letter code: Phosphatidylserine decarboxylase proenzyme (262 aa).

Active-site charge relay system; for autoendoproteolytic cleavage activity residues include D86, H142, and S226. S226 acts as the Schiff-base intermediate with substrate; via pyruvic acid; for decarboxylase activity in catalysis. S226 bears the Pyruvic acid (Ser); by autocatalysis mark.

It belongs to the phosphatidylserine decarboxylase family. PSD-B subfamily. Prokaryotic type I sub-subfamily. Heterodimer of a large membrane-associated beta subunit and a small pyruvoyl-containing alpha subunit. Pyruvate is required as a cofactor. In terms of processing, is synthesized initially as an inactive proenzyme. Formation of the active enzyme involves a self-maturation process in which the active site pyruvoyl group is generated from an internal serine residue via an autocatalytic post-translational modification. Two non-identical subunits are generated from the proenzyme in this reaction, and the pyruvate is formed at the N-terminus of the alpha chain, which is derived from the carboxyl end of the proenzyme. The autoendoproteolytic cleavage occurs by a canonical serine protease mechanism, in which the side chain hydroxyl group of the serine supplies its oxygen atom to form the C-terminus of the beta chain, while the remainder of the serine residue undergoes an oxidative deamination to produce ammonia and the pyruvoyl prosthetic group on the alpha chain. During this reaction, the Ser that is part of the protease active site of the proenzyme becomes the pyruvoyl prosthetic group, which constitutes an essential element of the active site of the mature decarboxylase.

It is found in the cell membrane. It carries out the reaction a 1,2-diacyl-sn-glycero-3-phospho-L-serine + H(+) = a 1,2-diacyl-sn-glycero-3-phosphoethanolamine + CO2. Its pathway is phospholipid metabolism; phosphatidylethanolamine biosynthesis; phosphatidylethanolamine from CDP-diacylglycerol: step 2/2. In terms of biological role, catalyzes the formation of phosphatidylethanolamine (PtdEtn) from phosphatidylserine (PtdSer). This chain is Phosphatidylserine decarboxylase proenzyme, found in Bacillus anthracis.